The primary structure comprises 289 residues: Probable ABC transporter permease protein BRA0749/BS1330_II0742 (289 aa).

6 helical membrane-spanning segments follow: residues Phe-9–Leu-29, Val-70–Leu-90, Val-99–Trp-119, Ile-144–Val-166, Ile-213–Thr-233, and Glu-260–Ile-280. An ABC transmembrane type-1 domain is found at Leu-65–Tyr-279.

This sequence belongs to the binding-protein-dependent transport system permease family. In terms of assembly, the complex is composed of two ATP-binding proteins (BRA0745), two transmembrane proteins (BRA0749) and a solute-binding protein (BRA0748).

It localises to the cell inner membrane. Functionally, probably part of an ABC transporter complex. Probably responsible for the translocation of the substrate across the membrane. The polypeptide is Probable ABC transporter permease protein BRA0749/BS1330_II0742 (Brucella suis biovar 1 (strain 1330)).